A 482-amino-acid chain; its full sequence is tRNA sulfurtransferase (482 aa).

The 105-residue stretch at 61 to 165 (LAIRDALTRI…DDRLLLIKGR (105 aa)) folds into the THUMP domain. ATP is bound by residues 183–184 (LI), K265, G287, and Q296. An intrachain disulfide couples C344 to C456. The region spanning 404 to 482 (FGANDVILDI…GFANVKVYRP (79 aa)) is the Rhodanese domain. C456 serves as the catalytic Cysteine persulfide intermediate.

It belongs to the ThiI family.

Its subcellular location is the cytoplasm. The catalysed reaction is [ThiI sulfur-carrier protein]-S-sulfanyl-L-cysteine + a uridine in tRNA + 2 reduced [2Fe-2S]-[ferredoxin] + ATP + H(+) = [ThiI sulfur-carrier protein]-L-cysteine + a 4-thiouridine in tRNA + 2 oxidized [2Fe-2S]-[ferredoxin] + AMP + diphosphate. The enzyme catalyses [ThiS sulfur-carrier protein]-C-terminal Gly-Gly-AMP + S-sulfanyl-L-cysteinyl-[cysteine desulfurase] + AH2 = [ThiS sulfur-carrier protein]-C-terminal-Gly-aminoethanethioate + L-cysteinyl-[cysteine desulfurase] + A + AMP + 2 H(+). It participates in cofactor biosynthesis; thiamine diphosphate biosynthesis. In terms of biological role, catalyzes the ATP-dependent transfer of a sulfur to tRNA to produce 4-thiouridine in position 8 of tRNAs, which functions as a near-UV photosensor. Also catalyzes the transfer of sulfur to the sulfur carrier protein ThiS, forming ThiS-thiocarboxylate. This is a step in the synthesis of thiazole, in the thiamine biosynthesis pathway. The sulfur is donated as persulfide by IscS. This is tRNA sulfurtransferase from Salmonella typhi.